We begin with the raw amino-acid sequence, 353 residues long: Melanin-concentrating hormone receptor 1 (353 aa).

At 1–45 (MDLQASLLSTGPNASNISDGQDNFTLAGPPPRTRSVSYINIIMPS) the chain is on the extracellular side. N-linked (GlcNAc...) asparagine glycosylation is found at Asn13, Asn16, and Asn23. Residues 46–66 (VFGTICLLGIVGNSTVIFAVV) traverse the membrane as a helical segment. The Cytoplasmic portion of the chain corresponds to 67 to 79 (KKSKLHWCSNVPD). A helical membrane pass occupies residues 80–100 (IFIINLSVVDLLFLLGMPFMI). At 101–116 (HQLMGNGVWHFGETMC) the chain is on the extracellular side. A disulfide bridge connects residues Cys116 and Cys194. The helical transmembrane segment at 117–139 (TLITAMDANSQFTSTYILTAMAI) threads the bilayer. Topologically, residues 140–161 (DRYLATVHPISSTKFRKPSMAT) are cytoplasmic. The chain crosses the membrane as a helical span at residues 162–182 (LVICLLWALSFISITPVWLYA). Over 183 to 204 (RLIPFPGGAVGCGIRLPNPDTD) the chain is Extracellular. A helical transmembrane segment spans residues 205 to 225 (LYWFTLYQFFLAFALPFVVIT). Residues 226–256 (AAYVKILQRMTSSVAPASQRSIRLRTKRVTR) are Cytoplasmic-facing. The chain crosses the membrane as a helical span at residues 257 to 277 (TAIAICLVFFVCWAPYYVLQL). Residues 278-294 (TQLSISRPTLTFVYLYN) are Extracellular-facing. A helical membrane pass occupies residues 295-315 (AAISLGYANSCLNPFVYIVLC). The Cytoplasmic portion of the chain corresponds to 316 to 353 (ETFRKRLVLSVKPAAQGQLRTVSNAQTADEERTESKGT).

The protein belongs to the G-protein coupled receptor 1 family. As to quaternary structure, interacts with NCDN. In terms of tissue distribution, expressed predominantly in the brain. Expression in brain is negatively regulated by leptin. Also found in the epithelium of the tongue and kidney.

The protein localises to the cell membrane. In terms of biological role, receptor for melanin-concentrating hormone, coupled to both G proteins that inhibit adenylyl cyclase and G proteins that activate phosphoinositide hydrolysis. This chain is Melanin-concentrating hormone receptor 1, found in Mus musculus (Mouse).